Consider the following 298-residue polypeptide: Diphthine methyl ester synthase (298 aa).

Residues L9, D85, G88, 113-114 (SV), L164, L222, and H247 contribute to the S-adenosyl-L-methionine site.

This sequence belongs to the diphthine synthase family.

It is found in the cytoplasm. The enzyme catalyses 2-[(3S)-amino-3-carboxypropyl]-L-histidyl-[translation elongation factor 2] + 4 S-adenosyl-L-methionine = diphthine methyl ester-[translation elongation factor 2] + 4 S-adenosyl-L-homocysteine + 3 H(+). It participates in protein modification; peptidyl-diphthamide biosynthesis. Functionally, S-adenosyl-L-methionine-dependent methyltransferase that catalyzes four methylations of the modified target histidine residue in translation elongation factor 2 (EF-2), to form an intermediate called diphthine methyl ester. The four successive methylation reactions represent the second step of diphthamide biosynthesis. This Kluyveromyces lactis (strain ATCC 8585 / CBS 2359 / DSM 70799 / NBRC 1267 / NRRL Y-1140 / WM37) (Yeast) protein is Diphthine methyl ester synthase (DPH5).